A 95-amino-acid polypeptide reads, in one-letter code: Opiscorpine-1 (95 aa).

Residues 1–19 form the signal peptide; sequence MNNKLTALIFLGLLAIASC. Residues 55 to 95 form the BetaSPN-type CS-alpha/beta domain; that stretch reads EFMCVANVDMTKSCDTHCQKASGEKGYCHGTKCKCGVPLSY. 3 cysteine pairs are disulfide-bonded: C58-C82, C68-C87, and C72-C89.

This sequence belongs to the long chain scorpion toxin family. Class 3 subfamily. As to expression, expressed by the venom gland.

It localises to the secreted. The short synthetic peptide (20-54) has antimicrobial activity against the yeasts F.culmorum (IC(50)=8.8 uM) and F.oxysporum (IC(50)=10 uM), and the Gram-negative bacteria E.coli. The sequence is that of Opiscorpine-1 from Opistophthalmus carinatus (African yellow leg scorpion).